A 189-amino-acid polypeptide reads, in one-letter code: Large ribosomal subunit protein bL9 (189 aa).

This sequence belongs to the bacterial ribosomal protein bL9 family.

Functionally, binds to the 23S rRNA. In Brucella canis (strain ATCC 23365 / NCTC 10854 / RM-666), this protein is Large ribosomal subunit protein bL9.